A 456-amino-acid polypeptide reads, in one-letter code: MYKSAVILAAGKGTRMKSALPKVLHKVCGKEMVNQVIDTLRKSDIEDIDLVIGNGAEEVKKATKDTHVLYSIQEEQLGTGHALMCAREFLEGKDGVVAVFTGDAPLITSETVKDCIEFHNKGEYKATILTAIVGNPFGYGRIIRDENGEVKKIVEHKDCTPEELKVNEINSGMYCFDIKELLNNLDKLNNNNSQGEYYLTDIIELLKEKGCKVGAISVNPDEIKGVNSRGQLAEAEEILRLRINERHMENGVTLIDPKNTYIGTDVEIEEDTIVYPGNVLEGKTVIKKGCVLYPNSRIKDSVIESGVEIQSSVILESHVGKNTTVGPFAYIRPESKIGEGARIGDFVEIKKSTIGNGTKVSHLTYIGDAEVGGGCNFGCGTVVVNYDGKTKNKTIIGDNSFIGCNTNLVSPVEVEDNTYIAAGSTITKKVQEGDLAIARAKQVNIKGWVAKKGLKK.

A pyrophosphorylase region spans residues 1–229; that stretch reads MYKSAVILAA…PDEIKGVNSR (229 aa). UDP-N-acetyl-alpha-D-glucosamine is bound by residues 8 to 11, lysine 22, glutamine 73, and 78 to 79; these read LAAG and GT. A Mg(2+)-binding site is contributed by aspartate 103. UDP-N-acetyl-alpha-D-glucosamine contacts are provided by glycine 140, glutamate 155, asparagine 170, and asparagine 227. Asparagine 227 contacts Mg(2+). Residues 230–250 are linker; that stretch reads GQLAEAEEILRLRINERHMEN. The segment at 251 to 456 is N-acetyltransferase; that stretch reads GVTLIDPKNT…GWVAKKGLKK (206 aa). UDP-N-acetyl-alpha-D-glucosamine contacts are provided by arginine 332 and lysine 350. The Proton acceptor role is filled by histidine 362. Tyrosine 365 and asparagine 376 together coordinate UDP-N-acetyl-alpha-D-glucosamine. Acetyl-CoA contacts are provided by residues 385 to 386, alanine 422, and arginine 439; that span reads NY.

The protein in the N-terminal section; belongs to the N-acetylglucosamine-1-phosphate uridyltransferase family. This sequence in the C-terminal section; belongs to the transferase hexapeptide repeat family. In terms of assembly, homotrimer. It depends on Mg(2+) as a cofactor.

It localises to the cytoplasm. The enzyme catalyses alpha-D-glucosamine 1-phosphate + acetyl-CoA = N-acetyl-alpha-D-glucosamine 1-phosphate + CoA + H(+). It carries out the reaction N-acetyl-alpha-D-glucosamine 1-phosphate + UTP + H(+) = UDP-N-acetyl-alpha-D-glucosamine + diphosphate. It functions in the pathway nucleotide-sugar biosynthesis; UDP-N-acetyl-alpha-D-glucosamine biosynthesis; N-acetyl-alpha-D-glucosamine 1-phosphate from alpha-D-glucosamine 6-phosphate (route II): step 2/2. It participates in nucleotide-sugar biosynthesis; UDP-N-acetyl-alpha-D-glucosamine biosynthesis; UDP-N-acetyl-alpha-D-glucosamine from N-acetyl-alpha-D-glucosamine 1-phosphate: step 1/1. The protein operates within bacterial outer membrane biogenesis; LPS lipid A biosynthesis. Catalyzes the last two sequential reactions in the de novo biosynthetic pathway for UDP-N-acetylglucosamine (UDP-GlcNAc). The C-terminal domain catalyzes the transfer of acetyl group from acetyl coenzyme A to glucosamine-1-phosphate (GlcN-1-P) to produce N-acetylglucosamine-1-phosphate (GlcNAc-1-P), which is converted into UDP-GlcNAc by the transfer of uridine 5-monophosphate (from uridine 5-triphosphate), a reaction catalyzed by the N-terminal domain. The chain is Bifunctional protein GlmU from Clostridium novyi (strain NT).